Reading from the N-terminus, the 529-residue chain is E3 ubiquitin-protein ligase arih1 (529 aa).

Disordered stretches follow at residues 1-30 (MDSD…EDDL) and 49-68 (GICG…GEEE). The segment covering 51–64 (CGEGGGSALGPGPG) has biased composition (gly residues). Residues 77-125 (TAEQILQHMVECIREVNEVIQNPATITRILLSHFNWDKEKLMERYFDGN) are UBA-like. The TRIAD supradomain stretch occupies residues 154-365 (QDMPCQICYL…SAWYNCNRYN (212 aa)). The Zn(2+) site is built by Cys158, Cys161, Cys175, His177, Cys180, Cys183, Cys203, Cys208, Cys248, Cys253, Cys269, Cys271, Cys276, Cys279, His284, Cys289, Cys316, and Cys319. The RING-type 1 zinc finger occupies 158 to 208 (CQICYLNYPNSYFTGLECGHKFCMQCWSEYLTTKIIEEGMGQTISCPAHGC). The IBR-type zinc finger occupies 228–289 (LKYQHLITNS…GENWHDPVKC (62 aa)). Residues 316–347 (CPKCHVTIEKDGGCNHMVCRNQNCKAEFCWVC) form an RING-type 2; atypical zinc finger. Cys329 is an active-site residue. Residues Cys334, Cys339, Cys344, Cys347, His354, and Cys361 each contribute to the Zn(2+) site. The ariadne domain stretch occupies residues 380–529 (RAALQRYLFY…EKDLWEYIED (150 aa)).

It belongs to the RBR family. Ariadne subfamily. In terms of assembly, interacts (via the first RING-type zinc finger) with ube2l3. Associates with cullin-RING ubiquitin ligase (CRL) complexes containing neddylated cullin.

The protein resides in the cytoplasm. It is found in the nucleus. The catalysed reaction is [E2 ubiquitin-conjugating enzyme]-S-ubiquitinyl-L-cysteine + [acceptor protein]-L-lysine = [E2 ubiquitin-conjugating enzyme]-L-cysteine + [acceptor protein]-N(6)-ubiquitinyl-L-lysine.. It participates in protein modification; protein ubiquitination. Its activity is regulated as follows. Autoinhibited by the ariadne domain, which masks the second RING-type zinc finger that contains the active site and inhibits the E3 activity. Inhibition is relieved upon binding to neddylated cullin-RING ubiquitin ligase complexes, which activate the E3 ligase activity of ARIH1. In terms of biological role, E3 ubiquitin-protein ligase, which catalyzes ubiquitination of target proteins together with ubiquitin-conjugating enzyme E2 ube2l3. Acts as an atypical E3 ubiquitin-protein ligase by working together with cullin-RING ubiquitin ligase (CRL) complexes and initiating ubiquitination of CRL substrates: associates with CRL complexes and specifically mediates addition of the first ubiquitin on CRLs targets. The initial ubiquitin is then elongated. E3 ubiquitin-protein ligase activity is activated upon binding to neddylated cullin-RING ubiquitin ligase complexes. The protein is E3 ubiquitin-protein ligase arih1 (arih1) of Xenopus tropicalis (Western clawed frog).